We begin with the raw amino-acid sequence, 304 residues long: UDP-3-O-acyl-N-acetylglucosamine deacetylase (304 aa).

The Zn(2+) site is built by His-78, His-237, and Asp-241. The active-site Proton donor is His-264.

Belongs to the LpxC family. The cofactor is Zn(2+).

It carries out the reaction a UDP-3-O-[(3R)-3-hydroxyacyl]-N-acetyl-alpha-D-glucosamine + H2O = a UDP-3-O-[(3R)-3-hydroxyacyl]-alpha-D-glucosamine + acetate. It functions in the pathway glycolipid biosynthesis; lipid IV(A) biosynthesis; lipid IV(A) from (3R)-3-hydroxytetradecanoyl-[acyl-carrier-protein] and UDP-N-acetyl-alpha-D-glucosamine: step 2/6. Functionally, catalyzes the hydrolysis of UDP-3-O-myristoyl-N-acetylglucosamine to form UDP-3-O-myristoylglucosamine and acetate, the committed step in lipid A biosynthesis. The polypeptide is UDP-3-O-acyl-N-acetylglucosamine deacetylase (Xylella fastidiosa (strain Temecula1 / ATCC 700964)).